The primary structure comprises 469 residues: 3-isopropylmalate dehydratase large subunit (469 aa).

[4Fe-4S] cluster contacts are provided by cysteine 348, cysteine 409, and cysteine 412.

Belongs to the aconitase/IPM isomerase family. LeuC type 1 subfamily. In terms of assembly, heterodimer of LeuC and LeuD. It depends on [4Fe-4S] cluster as a cofactor.

It carries out the reaction (2R,3S)-3-isopropylmalate = (2S)-2-isopropylmalate. It functions in the pathway amino-acid biosynthesis; L-leucine biosynthesis; L-leucine from 3-methyl-2-oxobutanoate: step 2/4. Functionally, catalyzes the isomerization between 2-isopropylmalate and 3-isopropylmalate, via the formation of 2-isopropylmaleate. This is 3-isopropylmalate dehydratase large subunit from Nitrosococcus oceani (strain ATCC 19707 / BCRC 17464 / JCM 30415 / NCIMB 11848 / C-107).